A 107-amino-acid polypeptide reads, in one-letter code: Serine palmitoyltransferase-regulating protein TSC3 (107 aa).

Residues valine 72 to leucine 92 traverse the membrane as a helical segment.

The protein resides in the endoplasmic reticulum membrane. Stimulates the activity of serine palmitoyltransferase (SPT). In Eremothecium gossypii (strain ATCC 10895 / CBS 109.51 / FGSC 9923 / NRRL Y-1056) (Yeast), this protein is Serine palmitoyltransferase-regulating protein TSC3 (TSC3).